The primary structure comprises 1036 residues: Isoleucine--tRNA ligase (1036 aa).

A 'HIGH' region motif is present at residues 46 to 56; it reads PFATGLPHYGH. Residues 589–593 carry the 'KMSKS' region motif; sequence KMSKR. Residue K592 participates in ATP binding.

This sequence belongs to the class-I aminoacyl-tRNA synthetase family. IleS type 2 subfamily. As to quaternary structure, monomer. Requires Zn(2+) as cofactor.

The protein localises to the cytoplasm. The catalysed reaction is tRNA(Ile) + L-isoleucine + ATP = L-isoleucyl-tRNA(Ile) + AMP + diphosphate. Catalyzes the attachment of isoleucine to tRNA(Ile). As IleRS can inadvertently accommodate and process structurally similar amino acids such as valine, to avoid such errors it has two additional distinct tRNA(Ile)-dependent editing activities. One activity is designated as 'pretransfer' editing and involves the hydrolysis of activated Val-AMP. The other activity is designated 'posttransfer' editing and involves deacylation of mischarged Val-tRNA(Ile). This is Isoleucine--tRNA ligase from Chlamydia trachomatis serovar L2b (strain UCH-1/proctitis).